Consider the following 397-residue polypeptide: Riboflavin biosynthesis protein RibBA (397 aa).

The tract at residues Met-1–His-199 is DHBP synthase. D-ribulose 5-phosphate-binding positions include Arg-26–Glu-27, Asp-31, Arg-138–Thr-142, and Glu-162. Residue Glu-27 participates in Mg(2+) binding. Mg(2+) is bound at residue His-141. Positions His-200–Leu-397 are GTP cyclohydrolase II. A GTP-binding site is contributed by Arg-250–Glu-254. Residues Cys-255, Cys-266, and Cys-268 each contribute to the Zn(2+) site. GTP is bound by residues Gln-271, Glu-293 to Arg-295, and Thr-315. Asp-327 functions as the Proton acceptor; for GTP cyclohydrolase activity in the catalytic mechanism. The active-site Nucleophile; for GTP cyclohydrolase activity is the Arg-329. GTP contacts are provided by Thr-350 and Lys-355.

The protein in the N-terminal section; belongs to the DHBP synthase family. It in the C-terminal section; belongs to the GTP cyclohydrolase II family. The cofactor is Mg(2+). It depends on Mn(2+) as a cofactor. Zn(2+) serves as cofactor.

The enzyme catalyses D-ribulose 5-phosphate = (2S)-2-hydroxy-3-oxobutyl phosphate + formate + H(+). It carries out the reaction GTP + 4 H2O = 2,5-diamino-6-hydroxy-4-(5-phosphoribosylamino)-pyrimidine + formate + 2 phosphate + 3 H(+). It participates in cofactor biosynthesis; riboflavin biosynthesis; 2-hydroxy-3-oxobutyl phosphate from D-ribulose 5-phosphate: step 1/1. The protein operates within cofactor biosynthesis; riboflavin biosynthesis; 5-amino-6-(D-ribitylamino)uracil from GTP: step 1/4. Its function is as follows. Catalyzes the conversion of D-ribulose 5-phosphate to formate and 3,4-dihydroxy-2-butanone 4-phosphate. Catalyzes the conversion of GTP to 2,5-diamino-6-ribosylamino-4(3H)-pyrimidinone 5'-phosphate (DARP), formate and pyrophosphate. The sequence is that of Riboflavin biosynthesis protein RibBA from Bacillus cereus (strain G9842).